The sequence spans 703 residues: Fanconi anemia group B protein homolog (703 aa).

As to quaternary structure, belongs to the multisubunit FA complex composed of FANCA, FANCB, FANCC, FANCE, FANCF, FANCG, FANCL/PHF9 and FANCM.

It is found in the nucleus. Its function is as follows. DNA repair protein required for FANCD2 ubiquitination. The sequence is that of Fanconi anemia group B protein homolog (Fancb) from Mus musculus (Mouse).